The primary structure comprises 165 residues: Lymphocyte antigen 6K (165 aa).

A signal peptide spans 1 to 17 (MALLALLLVVALPRVWT). Asparagine 20 carries N-linked (GlcNAc...) asparagine glycosylation. One can recognise a UPAR/Ly6 domain in the interval 47–141 (ERENTFECQN…VFKEYAGSMG (95 aa)). Glycine 138 is lipidated: GPI-anchor amidated glycine. A propeptide spans 139–165 (SMGESCGGLWLAILLLLASIAAGLSLS) (removed in mature form).

In terms of assembly, interacts with TEX101. As to expression, specifically expressed in testis (at protein level).

The protein localises to the secreted. It is found in the cytoplasm. It localises to the cell membrane. Its subcellular location is the cytoplasmic vesicle. The protein resides in the secretory vesicle. The protein localises to the acrosome. It is found in the membrane raft. Its function is as follows. Required for sperm migration into the oviduct and male fertility by controlling binding of sperm to zona pellucida. May play a role in cell growth. This is Lymphocyte antigen 6K from Homo sapiens (Human).